The chain runs to 325 residues: Odorant receptor 131-2 (325 aa).

The Extracellular segment spans residues 1 to 22; the sequence is MNSTSNSSLGNTFISKTLKEKS. N-linked (GlcNAc...) asparagine glycans are attached at residues N2 and N6. The chain crosses the membrane as a helical span at residues 23-43; that stretch reads LTVQVLVGILLYVNGLMIFTF. At 44-54 the chain is on the cytoplasmic side; that stretch reads LKKETFRDTRY. A helical transmembrane segment spans residues 55–75; sequence ILFAQTLFVDSALMLFADLTL. At 76–91 the chain is on the extracellular side; that stretch reads VGSAYELFIHIISCYI. A disulfide bridge connects residues C89 and C170. The helical transmembrane segment at 92-112 threads the bilayer; sequence FCTVMALLSICSPVTLVAMCL. The Cytoplasmic portion of the chain corresponds to 113–135; it reads ERYVAICLPLRHASISSPKNTIN. A helical membrane pass occupies residues 136–156; that stretch reads GLLIIWGVSSVIPLFIFIVSF. Residues 157-190 lie on the Extracellular side of the membrane; the sequence is TYTPPNAMNSYVVCSNDVMFQVKWLAEMRALSQQ. A helical transmembrane segment spans residues 191-211; the sequence is LLFVIMLCIVGSTYIKIMVAA. Topologically, residues 212–227 are cytoplasmic; sequence KSASAENKKSTYKGLR. The helical transmembrane segment at 228-248 threads the bilayer; the sequence is TVILHGLQLILGMMQLITPYI. The Extracellular segment spans residues 249-267; it reads DILTLKVDIMLFINVKFSN. The helical transmembrane segment at 268 to 285 threads the bilayer; that stretch reads FMLFWIFPRCLSPLVYGL. Over 286-325 the chain is Cytoplasmic; sequence RDKKFYNALKYYAFCGIYVCKKHKIKDSKTIRGAVSIAIY.

Belongs to the G-protein coupled receptor 1 family. Homodimer. Monomer.

The protein localises to the cell membrane. Its subcellular location is the cytoplasm. Probable olfactory receptor. This is Odorant receptor 131-2 from Danio rerio (Zebrafish).